A 275-amino-acid polypeptide reads, in one-letter code: Exosome complex component Rrp42 (275 aa).

Belongs to the RNase PH family. Rrp42 subfamily. As to quaternary structure, component of the archaeal exosome complex. Forms a hexameric ring-like arrangement composed of 3 Rrp41-Rrp42 heterodimers. The hexameric ring associates with a trimer of Rrp4 and/or Csl4 subunits.

It localises to the cytoplasm. Functionally, non-catalytic component of the exosome, which is a complex involved in RNA degradation. Contributes to the structuring of the Rrp41 active site. This chain is Exosome complex component Rrp42, found in Sulfurisphaera tokodaii (strain DSM 16993 / JCM 10545 / NBRC 100140 / 7) (Sulfolobus tokodaii).